The chain runs to 79 residues: D-alanyl carrier protein (79 aa).

The Carrier domain occupies 2–79 (AEFKEQVLDI…MVIKKLEEIR (78 aa)). S37 carries the O-(pantetheine 4'-phosphoryl)serine modification.

This sequence belongs to the DltC family. In terms of processing, 4'-phosphopantetheine is transferred from CoA to a specific serine of apo-DCP.

It localises to the cytoplasm. It participates in cell wall biogenesis; lipoteichoic acid biosynthesis. Its function is as follows. Carrier protein involved in the D-alanylation of lipoteichoic acid (LTA). The loading of thioester-linked D-alanine onto DltC is catalyzed by D-alanine--D-alanyl carrier protein ligase DltA. The DltC-carried D-alanyl group is further transferred to cell membrane phosphatidylglycerol (PG) by forming an ester bond, probably catalyzed by DltD. D-alanylation of LTA plays an important role in modulating the properties of the cell wall in Gram-positive bacteria, influencing the net charge of the cell wall. The chain is D-alanyl carrier protein from Bacillus mycoides (strain KBAB4) (Bacillus weihenstephanensis).